A 283-amino-acid polypeptide reads, in one-letter code: Protein FdhE homolog (283 aa).

It belongs to the FdhE family.

It localises to the cytoplasm. Its function is as follows. Necessary for formate dehydrogenase activity. In Aquifex aeolicus (strain VF5), this protein is Protein FdhE homolog.